The sequence spans 229 residues: Coiled-coil domain-containing protein 134 (229 aa).

Residues 1 to 22 (MDLLQSLAVFFVLLLPGTEVTG) form the signal peptide. The N-linked (GlcNAc...) asparagine glycan is linked to N148. A disordered region spans residues 191–229 (PSTDPFQKALREEEKRRKKEEKRKEIRKGPRISRSQSEL). Positions 196–218 (FQKALREEEKRRKKEEKRKEIRK) form a coiled coil. The Prevents secretion from ER signature appears at 226 to 229 (QSEL).

Belongs to the CCDC134 family. In terms of assembly, interacts with TADA2A. Associates with the PCAF complex via TADA2A binding. In terms of processing, O-glycosylated, with additional sialic acid modifications.

The protein localises to the endoplasmic reticulum lumen. Its subcellular location is the secreted. It is found in the cytoplasm. It localises to the nucleus. Functionally, molecular adapter required to prevent protein hyperglycosylation of HSP90B1: during translation, associates with nascent HSP90B1 and the STT3A catalytic component of the OST-A complex and tethers them to a specialized translocon that forms a microenvironment for HSP90B1 folding. In the CCDC134-containing translocon, STT3A associates with the SRT pseudosubstrate motif of HSP90B1, preventing access to facultative glycosylation sites until folding is completed, preventing hyperglycosylation and subsequent degradation of HSP90B1. In extracellular secreted form, promotes proliferation and activation of CD8(+) T-cells, suggesting a cytokine-like function. May inhibit ERK and JNK signaling activity. May suppress cell migration and invasion activity, via its effects on ERK and JNK signaling. May also localize in the nucleus: enhances stability of the PCAF histone acetyltransferase (HAT) complex member TADA2A and thus promotes PCAF-mediated histone acetyltransferase activity. Has a critical role in the regulation of osteogenesis and bone development. The polypeptide is Coiled-coil domain-containing protein 134 (Ccdc134) (Rattus norvegicus (Rat)).